Here is a 31-residue protein sequence, read N- to C-terminus: Palustrin-2c (31 aa).

A disulfide bond links cysteine 23 and cysteine 29.

Expressed by the skin glands.

It localises to the secreted. Functionally, antimicrobial activity against Gram-negative bacterium E.coli. This Lithobates palustris (Pickerel frog) protein is Palustrin-2c.